The primary structure comprises 92 residues: UPF0223 protein SGO_1052 (92 aa).

It belongs to the UPF0223 family.

This chain is UPF0223 protein SGO_1052, found in Streptococcus gordonii (strain Challis / ATCC 35105 / BCRC 15272 / CH1 / DL1 / V288).